Here is a 160-residue protein sequence, read N- to C-terminus: Large ribosomal subunit protein uL22c (160 aa).

Belongs to the universal ribosomal protein uL22 family. Part of the 50S ribosomal subunit.

It is found in the plastid. Its subcellular location is the chloroplast. This protein binds specifically to 23S rRNA. Its function is as follows. The globular domain of the protein is located near the polypeptide exit tunnel on the outside of the subunit, while an extended beta-hairpin is found that lines the wall of the exit tunnel in the center of the 70S ribosome. This Arabis hirsuta (Hairy rock-cress) protein is Large ribosomal subunit protein uL22c (rpl22).